Consider the following 635-residue polypeptide: Protein OPG056 (635 aa).

It belongs to the orthopoxvirus OPG056 family. In terms of assembly, interacts with protein OPG164/A36. Interacts with protein OPG064/E2.

The protein localises to the virion membrane. The protein resides in the host endosome. Its function is as follows. Plays a role in intracellular enveloped virus (IEV) transport to the cell surface through microtubule transport. Together with protein OPG064/E2, forms a complex that interacts with host KLC2 (kinesin light chain isoform 2) to engage the kinesin-1 complex and thereby promote IEV trafficking. The polypeptide is Protein OPG056 (OPG056) (Vaccinia virus (strain Western Reserve) (VACV)).